A 713-amino-acid polypeptide reads, in one-letter code: Forkhead box protein P2 (713 aa).

The span at M1 to D28 shows a compositional bias: polar residues. Disordered regions lie at residues M1–V44 and K283–S337. The segment covering T290 to S303 has biased composition (low complexity). The segment covering S313 to L322 has biased composition (polar residues). The segment covering A324–G335 has biased composition (basic and acidic residues). The C2H2-type zinc finger occupies G344–H369. Residues V386 to L407 are leucine-zipper. A CTBP1-binding region spans residues P420–V424. Residues T436 to Q457 are compositionally biased toward low complexity. The tract at residues T436 to T463 is disordered. A DNA-binding region (fork-head) is located at residues R502–L592. 2 disordered regions span residues L647–I666 and V676–E713. Residues L697–E713 are compositionally biased toward acidic residues.

In terms of assembly, forms homodimers and heterodimers with FOXP1 and FOXP4. Dimerization is required for DNA-binding. Interacts with CTBP1. Interacts with FOXP1. Interacts with TBR1. Interacts with ZMYM2.

Its subcellular location is the nucleus. Functionally, transcriptional repressor that may play a role in the specification and differentiation of lung epithelium. May also play a role in developing neural, gastrointestinal and cardiovascular tissues. Can act with CTBP1 to synergistically repress transcription but CTPBP1 is not essential. Plays a role in synapse formation by regulating SRPX2 levels. This chain is Forkhead box protein P2 (FOXP2), found in Gorilla gorilla gorilla (Western lowland gorilla).